A 225-amino-acid polypeptide reads, in one-letter code: LysM and putative peptidoglycan-binding domain-containing protein 1 (225 aa).

Ser-23 and Ser-33 each carry phosphoserine. In terms of domain architecture, LysM spans 40–84; sequence LEHQLAPGDTLAGLALKYGVTMEQIKRANRLYTNDSIFLKKTLHI. Residues 97 to 153 are disordered; that stretch reads LDSEEEKDGEEAVQPSKDEVRPHSAERKKRERGLGHANGEPLPTAGQEPARHDLSAS. The span at 98-107 shows a compositional bias: acidic residues; that stretch reads DSEEEKDGEE. The residue at position 99 (Ser-99) is a Phosphoserine. Basic and acidic residues predominate over residues 112 to 121; it reads SKDEVRPHSA. Residues Ser-164, Ser-179, Ser-192, and Ser-210 each carry the phosphoserine modification. Residues 170–225 form a disordered region; the sequence is AAQKLKKGESGIPGEDSSLHLSSPRMQQRAVLGPVPLTQTSRTRTLRDQEDEIFKL. Basic and acidic residues predominate over residues 214–225; that stretch reads TLRDQEDEIFKL.

This Bos taurus (Bovine) protein is LysM and putative peptidoglycan-binding domain-containing protein 1 (LYSMD1).